Consider the following 789-residue polypeptide: Alpha-glucosidase 2 (789 aa).

2 disordered regions span residues 1–24 (MTGLSPSGDIKPLLDDESQRPRVI) and 512–531 (ELNPQSLSSGLDDYPRASHP). Asp523 (proton donor) is an active-site residue. Glu756 (proton acceptor) is an active-site residue.

It belongs to the glycosyl hydrolase 63 family.

It participates in glycan metabolism; N-glycan degradation. The sequence is that of Alpha-glucosidase 2 (GCS2) from Arabidopsis thaliana (Mouse-ear cress).